The primary structure comprises 441 residues: tRNA-2-methylthio-N(6)-dimethylallyladenosine synthase (441 aa).

Residues 5 to 120 (KLLYIETFGC…LPEMVRAAEQ (116 aa)) enclose the MTTase N-terminal domain. [4Fe-4S] cluster-binding residues include cysteine 14, cysteine 50, cysteine 83, cysteine 158, cysteine 162, and cysteine 165. One can recognise a Radical SAM core domain in the interval 144-374 (EGGGVTRFVT…QGLQRDMTIE (231 aa)). A TRAM domain is found at 377-439 (AGFVGTCQAV…PNSLLGELAV (63 aa)).

Belongs to the methylthiotransferase family. MiaB subfamily. In terms of assembly, monomer. Requires [4Fe-4S] cluster as cofactor.

It localises to the cytoplasm. The enzyme catalyses N(6)-dimethylallyladenosine(37) in tRNA + (sulfur carrier)-SH + AH2 + 2 S-adenosyl-L-methionine = 2-methylsulfanyl-N(6)-dimethylallyladenosine(37) in tRNA + (sulfur carrier)-H + 5'-deoxyadenosine + L-methionine + A + S-adenosyl-L-homocysteine + 2 H(+). Catalyzes the methylthiolation of N6-(dimethylallyl)adenosine (i(6)A), leading to the formation of 2-methylthio-N6-(dimethylallyl)adenosine (ms(2)i(6)A) at position 37 in tRNAs that read codons beginning with uridine. The protein is tRNA-2-methylthio-N(6)-dimethylallyladenosine synthase of Geobacter metallireducens (strain ATCC 53774 / DSM 7210 / GS-15).